Reading from the N-terminus, the 521-residue chain is MGLGRCIWEGWTLESEALRRDMGTWLLACICICTCVCLGVSVTGEGQGPRSRTFTCLTNNILRIDCHWSAPELGQGSSPWLLFTSNQAPGGTHKCILRGSECTVVLPPEAVLVPSDNFTITFHHCMSGREQVSLVDPEYLPRRHVKLDPPSDLQSNISSGHCILTWSISPALEPMTTLLSYELAFKKQEEAWEQAQHRDHIVGVTWLILEAFELDPGFIHEARLRVQMATLEDDVVEEERYTGQWSEWSQPVCFQAPQRQGPLIPPWGWPGNTLVAVSIFLLLTGPTYLLFKLSPRVKRIFYQNVPSPAMFFQPLYSVHNGNFQTWMGAHGAGVLLSQDCAGTPQGALEPCVQEATALLTCGPARPWKSVALEEEQEGPGTRLPGNLSSEDVLPAGCTEWRVQTLAYLPQEDWAPTSLTRPAPPDSEGSRSSSSSSSSNNNNYCALGCYGGWHLSALPGNTQSSGPIPALACGLSCDHQGLETQQGVAWVLAGHCQRPGLHEDLQGMLLPSVLSKARSWTF.

Residues 1 to 40 form the signal peptide; the sequence is MGLGRCIWEGWTLESEALRRDMGTWLLACICICTCVCLGV. The Extracellular segment spans residues 41–270; sequence SVTGEGQGPR…GPLIPPWGWP (230 aa). N-linked (GlcNAc...) asparagine glycosylation is found at asparagine 117 and asparagine 156. The region spanning 149-259 is the Fibronectin type-III domain; it reads PPSDLQSNIS…QPVCFQAPQR (111 aa). The short motif at 245-249 is the WSXWS motif element; it reads WSEWS. The helical transmembrane segment at 271–291 threads the bilayer; the sequence is GNTLVAVSIFLLLTGPTYLLF. Residues 292–521 lie on the Cytoplasmic side of the membrane; the sequence is KLSPRVKRIF…VLSKARSWTF (230 aa). The Box 1 motif motif lies at 301–309; the sequence is FYQNVPSPA. The segment at 413–439 is disordered; the sequence is WAPTSLTRPAPPDSEGSRSSSSSSSSN. The span at 429 to 439 shows a compositional bias: low complexity; the sequence is SRSSSSSSSSN.

This sequence belongs to the type I cytokine receptor family. Type 4 subfamily. Interacts with IL9.

The protein resides in the cell membrane. Its subcellular location is the secreted. In terms of biological role, plays an important role in the immune response against parasites by acting as a receptor of IL9. The polypeptide is Interleukin-9 receptor (IL9R) (Homo sapiens (Human)).